Here is an 88-residue protein sequence, read N- to C-terminus: ATP synthase epsilon chain (88 aa).

The protein belongs to the ATPase epsilon chain family. F-type ATPases have 2 components, CF(1) - the catalytic core - and CF(0) - the membrane proton channel. CF(1) has five subunits: alpha(3), beta(3), gamma(1), delta(1), epsilon(1). CF(0) has three main subunits: a, b and c.

Its subcellular location is the cell inner membrane. Functionally, produces ATP from ADP in the presence of a proton gradient across the membrane. This Chlorobium limicola protein is ATP synthase epsilon chain (atpC).